The following is a 372-amino-acid chain: F-box protein AFR (372 aa).

A compositionally biased stretch (polar residues) spans 1-15; the sequence is MAEQETTSNINTIND. The segment at 1 to 27 is disordered; that stretch reads MAEQETTSNINTINDQAEEETRTKSQP. The 46-residue stretch at 29–74 folds into the F-box domain; that stretch reads ISGLPNDIAELCLLRLPYPYHALYRSVSSSWNKTITNPRFLFSKQS. Kelch repeat units lie at residues 80-126, 135-178, 179-227, 229-276, and 279-325; these read PYLF…HALS, KLFV…NVNG, KIMA…VIGK, MCVT…IRDR, and VISE…DRVF.

As to quaternary structure, part of a SCF (ASK-cullin-F-box) protein ligase complex. Interacts with SKP1A.

Its pathway is protein modification; protein ubiquitination. In terms of biological role, component of SCF (ASK-cullin-F-box) E3 ubiquitin ligase complexes, which may mediate the ubiquitination and subsequent proteasomal degradation of target proteins. Part of the phyA-mediated signaling transduction pathway leading to the regulation of gene expression and hypocotyls elongation in response to red and far-red light exposure. The sequence is that of F-box protein AFR (AFR) from Arabidopsis thaliana (Mouse-ear cress).